Reading from the N-terminus, the 569-residue chain is Endonuclease/exonuclease/phosphatase family domain-containing protein 1 (569 aa).

A lipid anchor (N-myristoyl glycine) is attached at Gly2. Ser16 and Ser25 each carry phosphoserine. A HhH domain is found at 38–67 (ERLNINTATEEELMTLPGVTRAVARSIVEY). Phosphoserine occurs at positions 106, 110, 160, and 173. The tract at residues 200 to 224 (SRPPSTHTNGGLTFTAKPHPSPTSL) is disordered. Positions 202 to 211 (PPSTHTNGGL) are enriched in polar residues. Position 265 is a phosphothreonine (Thr265). Residues 549 to 569 (VPRNGNGVTLEPSEANIKHER) form a disordered region.

The chain is Endonuclease/exonuclease/phosphatase family domain-containing protein 1 (Eepd1) from Mus musculus (Mouse).